The chain runs to 222 residues: Large ribosomal subunit protein uL3 (222 aa).

The tract at residues 129–150 is disordered; it reads HNFRGLPDSHGTERKHRSPGSI.

Belongs to the universal ribosomal protein uL3 family. In terms of assembly, part of the 50S ribosomal subunit. Forms a cluster with proteins L14 and L19.

One of the primary rRNA binding proteins, it binds directly near the 3'-end of the 23S rRNA, where it nucleates assembly of the 50S subunit. The protein is Large ribosomal subunit protein uL3 of Acidothermus cellulolyticus (strain ATCC 43068 / DSM 8971 / 11B).